We begin with the raw amino-acid sequence, 430 residues long: UDP-N-acetylglucosamine 1-carboxyvinyltransferase (430 aa).

Phosphoenolpyruvate is bound at residue 22–23 (KN). R102 contacts UDP-N-acetyl-alpha-D-glucosamine. C126 functions as the Proton donor in the catalytic mechanism. A 2-(S-cysteinyl)pyruvic acid O-phosphothioketal modification is found at C126. UDP-N-acetyl-alpha-D-glucosamine-binding positions include 131 to 135 (RPVDL), 172 to 175 (KVSV), D317, and I339.

It belongs to the EPSP synthase family. MurA subfamily.

It localises to the cytoplasm. It carries out the reaction phosphoenolpyruvate + UDP-N-acetyl-alpha-D-glucosamine = UDP-N-acetyl-3-O-(1-carboxyvinyl)-alpha-D-glucosamine + phosphate. The protein operates within cell wall biogenesis; peptidoglycan biosynthesis. Its function is as follows. Cell wall formation. Adds enolpyruvyl to UDP-N-acetylglucosamine. The protein is UDP-N-acetylglucosamine 1-carboxyvinyltransferase of Sinorhizobium medicae (strain WSM419) (Ensifer medicae).